The following is a 179-amino-acid chain: MKMFESLDSSATKSGRDLWAEICSCLPNPAQEDVSNNAFSDSFMDSHPAGEGSMAAADSAVQPALKPWAPLHDSEVYLASLEKKLRRIKGLNEEVTSKDMLRTLAQAKKECWDRFLQEKLASEFFVDGLDSDESTLEHFKRWLQPDKVAINTEEVQFLIPPESQAEKPEARDEPAAAEQ.

A coiled-coil region spans residues 75 to 98 (EVYLASLEKKLRRIKGLNEEVTSK). The segment at 157–179 (FLIPPESQAEKPEARDEPAAAEQ) is disordered. Residues 164-179 (QAEKPEARDEPAAAEQ) show a composition bias toward basic and acidic residues.

As to quaternary structure, interacts with AP2S1; the interaction is direct and mediates association with adaptor protein complex 2 (AP-2).

The protein localises to the membrane. The protein resides in the coated pit. In terms of biological role, regulates clathrin-mediated endocytsois of cargos such as transferrin probably through the association and modulation of adaptor protein complex 2 (AP-2). Has a role in ciliogenesis. Required for proper cephalic and left/right axis development. This chain is Coiled-coil domain-containing protein 32 (Ccdc32), found in Rattus norvegicus (Rat).